Here is a 158-residue protein sequence, read N- to C-terminus: U4/U6.U5 small nuclear ribonucleoprotein 27 kDa protein (158 aa).

The span at 1-30 shows a compositional bias: basic residues; that stretch reads MGRSRSRTPPRRERRRSRSSSRDRERRRRE. The segment at 1–100 is disordered; it reads MGRSRSRTPP…ISAEDMQGKT (100 aa). Positions 31 to 41 are enriched in basic and acidic residues; the sequence is RERSRSRDRDR. Residues 42–62 are compositionally biased toward basic residues; sequence RRSRSRSPHRRRSRSPRRHRS. Over residues 69-86 the composition is skewed to basic and acidic residues; that stretch reads RQKDRRDDDRKDVKEKPA.

It belongs to the SNUT3 family. In terms of assembly, part of a tri-snRNP complex.

The protein resides in the nucleus. Functionally, may play a role in mRNA splicing. The sequence is that of U4/U6.U5 small nuclear ribonucleoprotein 27 kDa protein (snrnp27) from Danio rerio (Zebrafish).